A 457-amino-acid chain; its full sequence is Protein translocase subunit SecY (457 aa).

10 consecutive transmembrane segments (helical) span residues 17-37 (IFFT…PVPG), 75-95 (IALG…LVVF), 118-138 (TRLF…KFAL), 162-182 (WVFY…LMWV), 195-215 (ISLI…GSIF), 230-250 (IVSL…TVLI), 287-307 (VIPV…GQFL), 326-346 (VAYS…WTAT), 386-406 (LLGA…GRIL), and 412-432 (VSYF…LDTM).

The protein belongs to the SecY/SEC61-alpha family. In terms of assembly, component of the Sec protein translocase complex. Heterotrimer consisting of SecY, SecE and SecG subunits. The heterotrimers can form oligomers, although 1 heterotrimer is thought to be able to translocate proteins. Interacts with the ribosome. Interacts with SecDF, and other proteins may be involved. Interacts with SecA.

It localises to the cell inner membrane. In terms of biological role, the central subunit of the protein translocation channel SecYEG. Consists of two halves formed by TMs 1-5 and 6-10. These two domains form a lateral gate at the front which open onto the bilayer between TMs 2 and 7, and are clamped together by SecE at the back. The channel is closed by both a pore ring composed of hydrophobic SecY resides and a short helix (helix 2A) on the extracellular side of the membrane which forms a plug. The plug probably moves laterally to allow the channel to open. The ring and the pore may move independently. The sequence is that of Protein translocase subunit SecY from Chlamydia trachomatis serovar D (strain ATCC VR-885 / DSM 19411 / UW-3/Cx).